The sequence spans 145 residues: uncharacterized protein (145 aa).

Residues 97 to 117 (ISMLLLIVIIAIGLTISYMVI) traverse the membrane as a helical segment.

Its subcellular location is the membrane. This is an uncharacterized protein from Methanocaldococcus jannaschii (strain ATCC 43067 / DSM 2661 / JAL-1 / JCM 10045 / NBRC 100440) (Methanococcus jannaschii).